The chain runs to 132 residues: Large ribosomal subunit protein uL14 (132 aa).

Belongs to the universal ribosomal protein uL14 family. In terms of assembly, part of the 50S ribosomal subunit. Forms a cluster with proteins L3 and L24e, part of which may contact the 16S rRNA in 2 intersubunit bridges.

Its function is as follows. Binds to 23S rRNA. Forms part of two intersubunit bridges in the 70S ribosome. This is Large ribosomal subunit protein uL14 from Halorubrum lacusprofundi (strain ATCC 49239 / DSM 5036 / JCM 8891 / ACAM 34).